A 25-amino-acid chain; its full sequence is Neuromedin-U-25 (25 aa).

Asparagine 25 is modified (asparagine amide).

It belongs to the NmU family.

Its subcellular location is the secreted. Functionally, stimulates uterine smooth muscle contraction and causes selective vasoconstriction. This is Neuromedin-U-25 (NMU) from Oryctolagus cuniculus (Rabbit).